A 246-amino-acid polypeptide reads, in one-letter code: MRSGVIARKVGMTRVFTDAGEHVPVTVLQIDQCQVVAHRTTEKDGYVALQVGVGKAKVKNVSQAERGRFAVAKVEPKKKLAEFRVSEDALIPVGAEITADHFIPGQFVDVTGTSTGKGFAGGMKRWNFGGLRATHGVSISHRSIGSTGGRQDPGKTFKNKKMPGHLGVERVTTQNLKVVRTDPERGLILVEGAVPGVAGGWIQVRDSVKRKLPADVPLPGKFRENGSAGASQIEAAPEAPASEENA.

Disordered stretches follow at residues S140–M162 and A214–A246. Q151 bears the N5-methylglutamine mark. Low complexity predominate over residues E234–A246.

Belongs to the universal ribosomal protein uL3 family. As to quaternary structure, part of the 50S ribosomal subunit. Forms a cluster with proteins L14 and L19. Post-translationally, methylated by PrmB.

One of the primary rRNA binding proteins, it binds directly near the 3'-end of the 23S rRNA, where it nucleates assembly of the 50S subunit. This chain is Large ribosomal subunit protein uL3, found in Methylorubrum extorquens (strain CM4 / NCIMB 13688) (Methylobacterium extorquens).